We begin with the raw amino-acid sequence, 439 residues long: GTPase Der (439 aa).

EngA-type G domains follow at residues 4–168 (PIVA…KDDE) and 177–352 (INIA…DNYT). GTP-binding positions include 10-17 (GRPNVGKS), 57-61 (DTGGI), 120-123 (NKID), 183-190 (GKPNVGKS), 230-234 (DTAGL), and 295-298 (NKWD). Residues 353-437 (KRVKTGVLND…GIKLEFRERK (85 aa)) enclose the KH-like domain.

Belongs to the TRAFAC class TrmE-Era-EngA-EngB-Septin-like GTPase superfamily. EngA (Der) GTPase family. Associates with the 50S ribosomal subunit.

In terms of biological role, GTPase that plays an essential role in the late steps of ribosome biogenesis. This is GTPase Der from Clostridium botulinum (strain Langeland / NCTC 10281 / Type F).